Here is a 405-residue protein sequence, read N- to C-terminus: L-carnitine CoA-transferase (405 aa).

CoA is bound by residues lysine 97 and arginine 104. The Nucleophile role is filled by aspartate 169.

Belongs to the CoA-transferase III family. CaiB subfamily. Homodimer.

Its subcellular location is the cytoplasm. The catalysed reaction is crotonobetainyl-CoA + (R)-carnitine = crotonobetaine + (R)-carnitinyl-CoA. The enzyme catalyses 4-(trimethylamino)butanoyl-CoA + (R)-carnitine = (R)-carnitinyl-CoA + 4-(trimethylamino)butanoate. The protein operates within amine and polyamine metabolism; carnitine metabolism. In terms of biological role, catalyzes the reversible transfer of the CoA moiety from gamma-butyrobetainyl-CoA to L-carnitine to generate L-carnitinyl-CoA and gamma-butyrobetaine. Is also able to catalyze the reversible transfer of the CoA moiety from gamma-butyrobetainyl-CoA or L-carnitinyl-CoA to crotonobetaine to generate crotonobetainyl-CoA. The chain is L-carnitine CoA-transferase from Escherichia coli O6:K15:H31 (strain 536 / UPEC).